The chain runs to 103 residues: Small ribosomal subunit protein uS10 (103 aa).

The protein belongs to the universal ribosomal protein uS10 family. Part of the 30S ribosomal subunit.

Its function is as follows. Involved in the binding of tRNA to the ribosomes. The sequence is that of Small ribosomal subunit protein uS10 from Mycoplasmopsis pulmonis (strain UAB CTIP) (Mycoplasma pulmonis).